The primary structure comprises 477 residues: Proline--tRNA ligase (477 aa).

Belongs to the class-II aminoacyl-tRNA synthetase family. ProS type 3 subfamily. Homodimer.

The protein localises to the cytoplasm. The enzyme catalyses tRNA(Pro) + L-proline + ATP = L-prolyl-tRNA(Pro) + AMP + diphosphate. Catalyzes the attachment of proline to tRNA(Pro) in a two-step reaction: proline is first activated by ATP to form Pro-AMP and then transferred to the acceptor end of tRNA(Pro). The polypeptide is Proline--tRNA ligase (Methanocorpusculum labreanum (strain ATCC 43576 / DSM 4855 / Z)).